The sequence spans 126 residues: Probable flagellum biosynthesis repressor protein FlbT (126 aa).

This sequence belongs to the FlbT family.

Has a post-transcriptional repressor function in flagellum biogenesis. Associates with the 5'-UTR of fljK mRNA and promotes its degradation. The polypeptide is Probable flagellum biosynthesis repressor protein FlbT (Rhodopseudomonas palustris (strain ATCC BAA-98 / CGA009)).